The sequence spans 1368 residues: DNA-directed RNA polymerase subunit beta (1368 aa).

Belongs to the RNA polymerase beta chain family. In terms of assembly, the RNAP catalytic core consists of 2 alpha, 1 beta, 1 beta' and 1 omega subunit. When a sigma factor is associated with the core the holoenzyme is formed, which can initiate transcription.

It carries out the reaction RNA(n) + a ribonucleoside 5'-triphosphate = RNA(n+1) + diphosphate. Functionally, DNA-dependent RNA polymerase catalyzes the transcription of DNA into RNA using the four ribonucleoside triphosphates as substrates. The protein is DNA-directed RNA polymerase subunit beta of Legionella pneumophila (strain Paris).